Here is a 427-residue protein sequence, read N- to C-terminus: MAATDIARQVGEGCRTVPLAGHVGFDSLPDQLVNKSVSQGFCFNILCVGETGLGKSTLMDTLFNTKFEGEPATHTQPGVQLRSNTYDLQESNVGLKLTIVSTVGFGDQINKEDSYKPIVEFIDAQFEAYLQEELKIRRVLHTYHDSRIHACLYFIAPTGHSLKSLDLVTMKKLDSKVNIIPIIAKSDAISKSELTKFKIKITSELVNNGVQIYQFPTDDESVAEINGTMNAHLPFAVIGSTEELKIGNKMMKARQYPWGTVQVENEAHCDFVKLREMLIRVNMEDLREQTHSRHYELYRRCKLEEMGFKDTDPDSKPFSLQETYEAKRNEFLGELQKKEEEMRQMFVQRVKEKEAELKEAEKELHEKFDRLKKLHQDEKKKLEDKKKSLDDEVNAFKQRKTAAELLQSQGSQAGGSQTLKRDKEKKN.

N-acetylalanine is present on Ala2. The residue at position 27 (Ser27) is a Phosphoserine. Positions 39-305 (QGFCFNILCV…ELYRRCKLEE (267 aa)) constitute a Septin-type G domain. The G1 motif stretch occupies residues 49–56 (GETGLGKS). GTP-binding positions include 49 to 56 (GETGLGKS), Gly104, 185 to 193 (KSDAISKSE), Gly239, and Arg254. The G3 motif stretch occupies residues 101–104 (STVG). The interval 184–187 (AKSD) is G4 motif. Residues 321-416 (QETYEAKRNE…QSQGSQAGGS (96 aa)) are a coiled coil. Lys367 is subject to N6-acetyllysine. The tract at residues 405–427 (LLQSQGSQAGGSQTLKRDKEKKN) is disordered. The span at 407–417 (QSQGSQAGGSQ) shows a compositional bias: low complexity. Ser416 is modified (phosphoserine). Thr418 is subject to Phosphothreonine.

Belongs to the TRAFAC class TrmE-Era-EngA-EngB-Septin-like GTPase superfamily. Septin GTPase family. In terms of assembly, septins polymerize into heterooligomeric protein complexes that form filaments, and associate with cellular membranes, actin filaments and microtubules. GTPase activity is required for filament formation. Filaments are assembled from asymmetrical heterotrimers, composed of SEPTIN2, SEPTIN6 and SEPTIN7 that associate head-to-head to form a hexameric unit. Within the trimer, directly interacts with SEPTIN2 and SEPTIN7. Also interacts with SEPTIN9 and SEPTIN12. Interaction with SEPTIN12 alters filament structure. Component of a septin core octameric complex consisting of SEPTIN12, SEPTIN7, SEPTIN6 and SEPTIN2 or SEPTIN4 in the order 12-7-6-2-2-6-7-12 or 12-7-6-4-4-6-7-12 and located in the sperm annulus. Interacts with SOCS7. Interacts with HNRNPA1.

It localises to the cytoplasm. The protein localises to the cytoskeleton. The protein resides in the spindle. Its subcellular location is the chromosome. It is found in the centromere. It localises to the kinetochore. The protein localises to the cleavage furrow. The protein resides in the midbody. Its subcellular location is the cell projection. It is found in the cilium. It localises to the flagellum. In terms of biological role, filament-forming cytoskeletal GTPase. Required for normal organization of the actin cytoskeleton. Involved in cytokinesis. Forms a filamentous structure with SEPTIN12, SEPTIN6, SEPTIN2 and probably SEPTIN4 at the sperm annulus which is required for the structural integrity and motility of the sperm tail during postmeiotic differentiation. The chain is Septin-6 from Bos taurus (Bovine).